We begin with the raw amino-acid sequence, 186 residues long: Large ribosomal subunit protein uL5 (186 aa).

The protein belongs to the universal ribosomal protein uL5 family. Part of the 50S ribosomal subunit; part of the 5S rRNA/L5/L18/L25 subcomplex. Contacts the 5S rRNA and the P site tRNA. Forms a bridge to the 30S subunit in the 70S ribosome.

Its function is as follows. This is one of the proteins that bind and probably mediate the attachment of the 5S RNA into the large ribosomal subunit, where it forms part of the central protuberance. In the 70S ribosome it contacts protein S13 of the 30S subunit (bridge B1b), connecting the 2 subunits; this bridge is implicated in subunit movement. Contacts the P site tRNA; the 5S rRNA and some of its associated proteins might help stabilize positioning of ribosome-bound tRNAs. The chain is Large ribosomal subunit protein uL5 from Maricaulis maris (strain MCS10) (Caulobacter maris).